We begin with the raw amino-acid sequence, 351 residues long: Molybdenum import ATP-binding protein ModC (351 aa).

In terms of domain architecture, ABC transporter spans Met-1 to Ser-229. Gly-31–Thr-38 contributes to the ATP binding site. Residues Gln-289–Met-351 form the Mop domain.

This sequence belongs to the ABC transporter superfamily. Molybdate importer (TC 3.A.1.8) family. As to quaternary structure, the complex is composed of two ATP-binding proteins (ModC), two transmembrane proteins (ModB) and a solute-binding protein (ModA).

The protein localises to the cell inner membrane. The enzyme catalyses molybdate(out) + ATP + H2O = molybdate(in) + ADP + phosphate + H(+). Functionally, part of the ABC transporter complex ModABC involved in molybdenum import. Responsible for energy coupling to the transport system. This Haemophilus influenzae (strain ATCC 51907 / DSM 11121 / KW20 / Rd) protein is Molybdenum import ATP-binding protein ModC.